The sequence spans 649 residues: MSEKVIDVQDAWRDRALIDEAKYKEMYEASVSGPETFWGEHGKRIDWSTPFSKVKNTSFAPGDVSIKWFEDGKTNVALNCIDRHLATRGDQTAIIWEGDDPNESKHITYRQLHAEVCRMANVLRNRGVGKGDRVTLYLPMIPEAAYAMLACARLGAIHAIVFGGFSPDSLASRIKGCGSKLVITADEGLRGGRKVPLKANVDEAIKRLDKDLVDHVIVVKRTGGNVAMEPGRDVYYHEAAEQVTDECPAEAVEAEHPLFILYTSGSTGQPKGVVHTTGGYLVYASMTHQYVFDYHDGDVYWCTADVGWVTGHSYIVYGPLANGATTLMFEGIPTYPSNSRFWEVIDKHNVNIFYTAPTAIRSLMGGGEGPVKKTSRQSLRVLGSVGEPINPEAWDWYYRVVGDSRCPIVDTWWQTETGGILITPLPGATRLKPGSATLPFFGVQPVMVDAEGKILDGACEGNLCIKDSWPGQMRTVYGDHERFEQTYFSTYKDLYFTGDGARRDADGYYWITGRVDDVINVSGHRMGTAEVESSLVAHPKVSEAAVVGYPHNVKGQGIYAYVTLNEGEEGTDELRKELVTWVRKDIGPIASPDLLQFAPGLPKTRSGKIMRRILRKIAEDDFGSLGDTSTLAEPAVVDDLIENRQNRSA.

CoA-binding positions include 190-193 (RGGR) and threonine 310. ATP is bound by residues 386–388 (GEP), 410–415 (DTWWQT), aspartate 499, and arginine 514. Serine 522 serves as a coordination point for CoA. Residue arginine 525 coordinates ATP. Mg(2+) is bound by residues valine 536, histidine 538, and valine 541. Arginine 583 provides a ligand contact to CoA. At lysine 608 the chain carries N6-acetyllysine.

It belongs to the ATP-dependent AMP-binding enzyme family. Mg(2+) serves as cofactor. Acetylated. Deacetylation by the SIR2-homolog deacetylase activates the enzyme.

The enzyme catalyses acetate + ATP + CoA = acetyl-CoA + AMP + diphosphate. In terms of biological role, catalyzes the conversion of acetate into acetyl-CoA (AcCoA), an essential intermediate at the junction of anabolic and catabolic pathways. AcsA undergoes a two-step reaction. In the first half reaction, AcsA combines acetate with ATP to form acetyl-adenylate (AcAMP) intermediate. In the second half reaction, it can then transfer the acetyl group from AcAMP to the sulfhydryl group of CoA, forming the product AcCoA. This chain is Acetyl-coenzyme A synthetase, found in Methylorubrum extorquens (strain PA1) (Methylobacterium extorquens).